We begin with the raw amino-acid sequence, 497 residues long: Acetyl-coenzyme A carboxylase carboxyl transferase subunit beta (497 aa).

One can recognise a CoA carboxyltransferase N-terminal domain in the interval L217–Y489. The Zn(2+) site is built by C221, C224, C240, and C243. The C4-type zinc-finger motif lies at C221–C243.

This sequence belongs to the AccD/PCCB family. Acetyl-CoA carboxylase is a heterohexamer composed of biotin carboxyl carrier protein, biotin carboxylase and 2 subunits each of ACCase subunit alpha and ACCase plastid-coded subunit beta (accD). Zn(2+) serves as cofactor.

The protein resides in the plastid. It catalyses the reaction N(6)-carboxybiotinyl-L-lysyl-[protein] + acetyl-CoA = N(6)-biotinyl-L-lysyl-[protein] + malonyl-CoA. The protein operates within lipid metabolism; malonyl-CoA biosynthesis; malonyl-CoA from acetyl-CoA: step 1/1. Its function is as follows. Component of the acetyl coenzyme A carboxylase (ACC) complex. Biotin carboxylase (BC) catalyzes the carboxylation of biotin on its carrier protein (BCCP) and then the CO(2) group is transferred by the transcarboxylase to acetyl-CoA to form malonyl-CoA. This Cuscuta reflexa (Southern Asian dodder) protein is Acetyl-coenzyme A carboxylase carboxyl transferase subunit beta.